We begin with the raw amino-acid sequence, 130 residues long: S-adenosylmethionine decarboxylase proenzyme (130 aa).

S63 (schiff-base intermediate with substrate; via pyruvic acid) is an active-site residue. Residue S63 is modified to Pyruvic acid (Ser); by autocatalysis. The active-site Proton acceptor; for processing activity is the H68. C83 functions as the Proton donor; for catalytic activity in the catalytic mechanism.

The protein belongs to the prokaryotic AdoMetDC family. Type 1 subfamily. As to quaternary structure, heterotetramer of two alpha and two beta chains arranged as a dimer of alpha/beta heterodimers. It depends on pyruvate as a cofactor. Post-translationally, is synthesized initially as an inactive proenzyme. Formation of the active enzyme involves a self-maturation process in which the active site pyruvoyl group is generated from an internal serine residue via an autocatalytic post-translational modification. Two non-identical subunits are generated from the proenzyme in this reaction, and the pyruvate is formed at the N-terminus of the alpha chain, which is derived from the carboxyl end of the proenzyme. The post-translation cleavage follows an unusual pathway, termed non-hydrolytic serinolysis, in which the side chain hydroxyl group of the serine supplies its oxygen atom to form the C-terminus of the beta chain, while the remainder of the serine residue undergoes an oxidative deamination to produce ammonia and the pyruvoyl group blocking the N-terminus of the alpha chain.

It carries out the reaction S-adenosyl-L-methionine + H(+) = S-adenosyl 3-(methylsulfanyl)propylamine + CO2. Its pathway is amine and polyamine biosynthesis; S-adenosylmethioninamine biosynthesis; S-adenosylmethioninamine from S-adenosyl-L-methionine: step 1/1. Its function is as follows. Catalyzes the decarboxylation of S-adenosylmethionine to S-adenosylmethioninamine (dcAdoMet), the propylamine donor required for the synthesis of the polyamines spermine and spermidine from the diamine putrescine. This Thermosipho africanus (strain TCF52B) protein is S-adenosylmethionine decarboxylase proenzyme.